The following is a 359-amino-acid chain: Photosystem II protein D1 1 (359 aa).

Transmembrane regions (helical) follow at residues 29 to 46, 118 to 133, and 142 to 156; these read YVGW…AATT, HFLI…EWEL, and WICV…AASA. Position 118 (H118) interacts with chlorophyll a. Position 126 (Y126) interacts with pheophytin a. Residues D170 and E189 each coordinate [CaMn4O5] cluster. The helical transmembrane segment at 197-218 threads the bilayer; the sequence is FHMMGVAGVFGGSLFSAMHGSL. A chlorophyll a-binding site is contributed by H198. A quinone is bound by residues H215 and 264–265; that span reads SF. H215 is a binding site for Fe cation. Residue H272 coordinates Fe cation. A helical transmembrane segment spans residues 274–288; that stretch reads FLAAWPVVGIWFTAL. [CaMn4O5] cluster contacts are provided by H332, E333, D342, and A344. Positions 345 to 359 are excised as a propeptide; sequence AAESTPVALQAPAIG.

It belongs to the reaction center PufL/M/PsbA/D family. In terms of assembly, PSII is composed of 1 copy each of membrane proteins PsbA, PsbB, PsbC, PsbD, PsbE, PsbF, PsbH, PsbI, PsbJ, PsbK, PsbL, PsbM, PsbT, PsbX, PsbY, PsbZ, Psb30/Ycf12, peripheral proteins PsbO, CyanoQ (PsbQ), PsbU, PsbV and a large number of cofactors. It forms dimeric complexes. The D1/D2 heterodimer binds P680, chlorophylls that are the primary electron donor of PSII, and subsequent electron acceptors. It shares a non-heme iron and each subunit binds pheophytin, quinone, additional chlorophylls, carotenoids and lipids. D1 provides most of the ligands for the Mn4-Ca-O5 cluster of the oxygen-evolving complex (OEC). There is also a Cl(-1) ion associated with D1 and D2, which is required for oxygen evolution. The PSII complex binds additional chlorophylls, carotenoids and specific lipids. serves as cofactor. Post-translationally, tyr-161 forms a radical intermediate that is referred to as redox-active TyrZ, YZ or Y-Z. In terms of processing, C-terminally processed by CtpA; processing is essential to allow assembly of the oxygen-evolving complex and thus photosynthetic growth.

Its subcellular location is the cellular thylakoid membrane. It catalyses the reaction 2 a plastoquinone + 4 hnu + 2 H2O = 2 a plastoquinol + O2. Functionally, photosystem II (PSII) is a light-driven water:plastoquinone oxidoreductase that uses light energy to abstract electrons from H(2)O, generating O(2) and a proton gradient subsequently used for ATP formation. It consists of a core antenna complex that captures photons, and an electron transfer chain that converts photonic excitation into a charge separation. The D1/D2 (PsbA/PsbD) reaction center heterodimer binds P680, the primary electron donor of PSII as well as several subsequent electron acceptors. In Synechococcus sp. (strain WH7803), this protein is Photosystem II protein D1 1.